Reading from the N-terminus, the 266-residue chain is Small ribosomal subunit protein uS2 (266 aa).

The interval 233 to 266 is disordered; sequence AVREEEFASAPDAGKKGRQAQPKKGKRASDAAAE. Residues 248-258 are compositionally biased toward basic residues; it reads KGRQAQPKKGK.

Belongs to the universal ribosomal protein uS2 family.

The sequence is that of Small ribosomal subunit protein uS2 from Xylella fastidiosa (strain M23).